The chain runs to 367 residues: MNIKTRTKKILQKAMDEPITKEEALYLMGVTGRDLQALMIAADMVREAEAGDRITYIENWNINFTNICSGQCGFCAFKRDAADGDSYYLETERILEIAAEAIEKGARELCIQGGLYPGLDTYFYEDLIRAIKSEFPDVHLHSFSPMEVYYGAQNAELTVEEALKILKRAGLGSMPGTAAEILDDDVRAVICPTKLSTGEWVEVIETAHRVGIPTTCTMMYGHIDGPEHRVEHMDILRRIQEKTGGFTEFVPLPFMHPHAPIYREGLAMPGATGADDLKVYAISRLMFRGLIENIQASWVKLGFKFAQVALLSGANDIGGTLGEENISKSAGASHGVRTEPEEIIRVVRDIGRIPARRDTLYREIEDV.

One can recognise a Radical SAM core domain in the interval I54–R288. Positions 68, 72, and 75 each coordinate [4Fe-4S] cluster.

It belongs to the radical SAM superfamily. CofH family. As to quaternary structure, consists of two subunits, CofG and CofH. It depends on [4Fe-4S] cluster as a cofactor.

It carries out the reaction 5-amino-6-(D-ribitylamino)uracil + L-tyrosine + S-adenosyl-L-methionine = 5-amino-5-(4-hydroxybenzyl)-6-(D-ribitylimino)-5,6-dihydrouracil + 2-iminoacetate + 5'-deoxyadenosine + L-methionine + H(+). It functions in the pathway cofactor biosynthesis; coenzyme F0 biosynthesis. Catalyzes the radical-mediated synthesis of 5-amino-5-(4-hydroxybenzyl)-6-(D-ribitylimino)-5,6-dihydrouracil from 5-amino-6-(D-ribitylamino)uracil and L-tyrosine. This Methanothermobacter thermautotrophicus (strain ATCC 29096 / DSM 1053 / JCM 10044 / NBRC 100330 / Delta H) (Methanobacterium thermoautotrophicum) protein is 5-amino-6-(D-ribitylamino)uracil--L-tyrosine 4-hydroxyphenyl transferase.